A 141-amino-acid chain; its full sequence is MMTERTFSIIKPDVVKRNLIGAILTRFEQNGFKIIASKMVRLTREQAEGFYAEHQGKEFFVPLVEYMMSSPIVVSVLEKENAVKDYRTLIGTTNPETAAEGTIRKDFALSQRENSVHGSDSIESANREIAYFFTNSEIFER.

Positions 11, 59, 87, 93, 104, and 114 each coordinate ATP. Residue His-117 is the Pros-phosphohistidine intermediate of the active site.

Belongs to the NDK family. Homotetramer. Requires Mg(2+) as cofactor.

The protein localises to the cytoplasm. It catalyses the reaction a 2'-deoxyribonucleoside 5'-diphosphate + ATP = a 2'-deoxyribonucleoside 5'-triphosphate + ADP. The catalysed reaction is a ribonucleoside 5'-diphosphate + ATP = a ribonucleoside 5'-triphosphate + ADP. Major role in the synthesis of nucleoside triphosphates other than ATP. The ATP gamma phosphate is transferred to the NDP beta phosphate via a ping-pong mechanism, using a phosphorylated active-site intermediate. The chain is Nucleoside diphosphate kinase from Haemophilus influenzae (strain ATCC 51907 / DSM 11121 / KW20 / Rd).